We begin with the raw amino-acid sequence, 281 residues long: Energy-coupling factor transporter ATP-binding protein EcfA1 (281 aa).

An ABC transporter domain is found at 7–242 (IAAEDITFRY…NQDLIKIGLD (236 aa)). 42–49 (GHNGSGKS) contributes to the ATP binding site.

The protein belongs to the ABC transporter superfamily. Energy-coupling factor EcfA family. Forms a stable energy-coupling factor (ECF) transporter complex composed of 2 membrane-embedded substrate-binding proteins (S component), 2 ATP-binding proteins (A component) and 2 transmembrane proteins (T component).

The protein resides in the cell membrane. ATP-binding (A) component of a common energy-coupling factor (ECF) ABC-transporter complex. Unlike classic ABC transporters this ECF transporter provides the energy necessary to transport a number of different substrates. The sequence is that of Energy-coupling factor transporter ATP-binding protein EcfA1 from Bacillus licheniformis (strain ATCC 14580 / DSM 13 / JCM 2505 / CCUG 7422 / NBRC 12200 / NCIMB 9375 / NCTC 10341 / NRRL NRS-1264 / Gibson 46).